Here is a 541-residue protein sequence, read N- to C-terminus: Protein wntless homolog (541 aa).

Topologically, residues 1 to 15 (MAGAIIENMGTKKLC) are cytoplasmic. Residues 16–36 (IVGGILLVFQIIAFLVGGLIA) form a helical membrane-spanning segment. Residues 37-232 (PGPTTAVSYM…GIHQNGGFTK (196 aa)) are Lumenal-facing. The segment at 101–232 (MEMSPWFQFM…GIHQNGGFTK (132 aa)) is interaction with Wnt proteins. Residues 233 to 253 (VWFAMKTFLTPSIFIIMVWYW) traverse the membrane as a helical segment. The Cytoplasmic segment spans residues 254–268 (RRITMMSRPPVLLEK). Residues 269–289 (VIFALGISMTFINIPVEWFSI) form a helical membrane-spanning segment. The Lumenal portion of the chain corresponds to 290–303 (GFDWTWMLLFGDIR). The helical transmembrane segment at 304–324 (QGIFYAMLLSFWIIFCGEHMM) threads the bilayer. Residues 325-331 (DQHERNH) are Cytoplasmic-facing. The helical transmembrane segment at 332–352 (IAGYWKQVGPIAVGSFCLFIF) threads the bilayer. Over 353 to 380 (DMCERGVQLTNPFYSIWTTDIGTELAMA) the chain is Lumenal. Residues 381-401 (FIIVAGICLCLYFLFLCFMVF) form a helical membrane-spanning segment. Over 402–431 (QVFRNISGKQSSLPAMSKVRRLHYEGLIFR) the chain is Cytoplasmic. A helical membrane pass occupies residues 432-452 (FKFLMLITLACAAMTVIFFIV). The Lumenal portion of the chain corresponds to 453-471 (SQVTEGHWKWGGVTVQVNS). A helical membrane pass occupies residues 472–492 (AFFTGIYGMWNLYVFALMFLY). Topologically, residues 493–541 (APSHKNYGEDQSNGDLGVHSGEELQLTTTITHVDGPTEIYKLTRKEAQE) are cytoplasmic.

This sequence belongs to the wntless family. In terms of assembly, interacts with WNT3A. Interacts with WNT1, WNT3 and WNT5A.

It localises to the golgi apparatus membrane. Its subcellular location is the cytoplasmic vesicle membrane. It is found in the cell membrane. The protein localises to the endoplasmic reticulum membrane. The protein resides in the early endosome membrane. Functionally, regulates Wnt proteins sorting and secretion in a feedback regulatory mechanism. This reciprocal interaction plays a key role in the regulation of expression, subcellular location, binding and organelle-specific association of Wnt proteins. Also plays an important role in establishment of the anterior-posterior body axis formation during development. The protein is Protein wntless homolog (WLS) of Pongo abelii (Sumatran orangutan).